We begin with the raw amino-acid sequence, 189 residues long: Ribonuclease M5 2 (189 aa).

Residues 8–91 (SQVIVAEGRD…VFLKRDEAVP (84 aa)) enclose the Toprim domain. The Mg(2+) site is built by Glu14, Asp60, and Asp62.

Belongs to the ribonuclease M5 family. Requires Mg(2+) as cofactor.

It localises to the cytoplasm. It carries out the reaction Endonucleolytic cleavage of RNA, removing 21 and 42 nucleotides, respectively, from the 5'- and 3'-termini of a 5S-rRNA precursor.. Required for correct processing of both the 5' and 3' ends of 5S rRNA precursor. Cleaves both sides of a double-stranded region yielding mature 5S rRNA in one step. The chain is Ribonuclease M5 2 from Ligilactobacillus salivarius (strain UCC118) (Lactobacillus salivarius).